Reading from the N-terminus, the 330-residue chain is Phosphate acyltransferase (330 aa).

It belongs to the PlsX family. In terms of assembly, homodimer. Probably interacts with PlsY.

It is found in the cytoplasm. It carries out the reaction a fatty acyl-[ACP] + phosphate = an acyl phosphate + holo-[ACP]. It functions in the pathway lipid metabolism; phospholipid metabolism. Functionally, catalyzes the reversible formation of acyl-phosphate (acyl-PO(4)) from acyl-[acyl-carrier-protein] (acyl-ACP). This enzyme utilizes acyl-ACP as fatty acyl donor, but not acyl-CoA. The chain is Phosphate acyltransferase from Streptococcus pneumoniae (strain P1031).